A 438-amino-acid chain; its full sequence is Chromosomal replication initiator protein DnaA (438 aa).

Residues 1 to 68 (MKDNILSALK…VVKESLGKDA (68 aa)) form a domain I, interacts with DnaA modulators region. Positions 68-98 (ATFEIVYKEIDITQENEEKGPLVRKRPLLIT) are domain II. Residues 99–314 (PLNPKYTFEN…GAILKLIAYK (216 aa)) form a domain III, AAA+ region region. The ATP site is built by Gly-142, Gly-144, Lys-145, and Thr-146. The tract at residues 315–438 (NLYGSLNLSI…TKNFAQGESI (124 aa)) is domain IV, binds dsDNA.

Belongs to the DnaA family. As to quaternary structure, oligomerizes as a right-handed, spiral filament on DNA at oriC.

Its subcellular location is the cytoplasm. In terms of biological role, plays an essential role in the initiation and regulation of chromosomal replication. ATP-DnaA binds to the origin of replication (oriC) to initiate formation of the DNA replication initiation complex once per cell cycle. Binds the DnaA box (a 9 base pair repeat at the origin) and separates the double-stranded (ds)DNA. Forms a right-handed helical filament on oriC DNA; dsDNA binds to the exterior of the filament while single-stranded (ss)DNA is stabiized in the filament's interior. The ATP-DnaA-oriC complex binds and stabilizes one strand of the AT-rich DNA unwinding element (DUE), permitting loading of DNA polymerase. After initiation quickly degrades to an ADP-DnaA complex that is not apt for DNA replication. Binds acidic phospholipids. This chain is Chromosomal replication initiator protein DnaA, found in Thermosipho africanus (strain TCF52B).